Reading from the N-terminus, the 110-residue chain is Mitochondrial pyruvate carrier 1 (110 aa).

2 helical membrane passes run 20–36 and 44–61; these read HFWG…AGLV and MISG…ALFM.

This sequence belongs to the mitochondrial pyruvate carrier (MPC) (TC 2.A.105) family.

It localises to the mitochondrion inner membrane. Functionally, mediates the uptake of pyruvate into mitochondria. This chain is Mitochondrial pyruvate carrier 1, found in Arabidopsis thaliana (Mouse-ear cress).